Consider the following 256-residue polypeptide: Small ribosomal subunit protein eS1 (256 aa).

Ala2 is modified (N-acetylalanine; partial).

It belongs to the eukaryotic ribosomal protein eS1 family. As to quaternary structure, component of the small ribosomal subunit. Mature ribosomes consist of a small (40S) and a large (60S) subunit. The 40S subunit contains about 33 different proteins and 1 molecule of RNA (18S). The 60S subunit contains about 49 different proteins and 3 molecules of RNA (25S, 5.8S and 5S).

It localises to the cytoplasm. In Fusarium vanettenii (strain ATCC MYA-4622 / CBS 123669 / FGSC 9596 / NRRL 45880 / 77-13-4) (Fusarium solani subsp. pisi), this protein is Small ribosomal subunit protein eS1.